The sequence spans 299 residues: NAD kinase (299 aa).

The active-site Proton acceptor is the D71. NAD(+)-binding positions include 71–72, 145–146, R173, D175, 186–191, A210, and Q248; these read DG, ND, and TAYSLS.

Belongs to the NAD kinase family. A divalent metal cation serves as cofactor.

It localises to the cytoplasm. It carries out the reaction NAD(+) + ATP = ADP + NADP(+) + H(+). Involved in the regulation of the intracellular balance of NAD and NADP, and is a key enzyme in the biosynthesis of NADP. Catalyzes specifically the phosphorylation on 2'-hydroxyl of the adenosine moiety of NAD to yield NADP. The protein is NAD kinase of Bordetella pertussis (strain Tohama I / ATCC BAA-589 / NCTC 13251).